The primary structure comprises 315 residues: Methionyl-tRNA formyltransferase (315 aa).

(6S)-5,6,7,8-tetrahydrofolate is bound at residue 113-116; it reads SLLP.

This sequence belongs to the Fmt family.

The enzyme catalyses L-methionyl-tRNA(fMet) + (6R)-10-formyltetrahydrofolate = N-formyl-L-methionyl-tRNA(fMet) + (6S)-5,6,7,8-tetrahydrofolate + H(+). Its function is as follows. Attaches a formyl group to the free amino group of methionyl-tRNA(fMet). The formyl group appears to play a dual role in the initiator identity of N-formylmethionyl-tRNA by promoting its recognition by IF2 and preventing the misappropriation of this tRNA by the elongation apparatus. In Shigella boydii serotype 18 (strain CDC 3083-94 / BS512), this protein is Methionyl-tRNA formyltransferase.